The primary structure comprises 2824 residues: Highly reducing polyketide synthase stpks1 (2824 aa).

In terms of domain architecture, Ketosynthase family 3 (KS3) spans 8 to 428; that stretch reads PKPVAVVGIS…GANGHVIAES (421 aa). Active-site for beta-ketoacyl synthase activity residues include Cys-177, His-312, and His-348. Positions 517–854 are malonyl-CoA:ACP transacylase (MAT) domain; that stretch reads QLVFVFSGQG…LTAVGNLSTL (338 aa). Ser-616 acts as the For malonyltransferase activity in catalysis. The N-terminal hotdog fold stretch occupies residues 886-1004; sequence MPFYSESSEL…GFMTTEVMDK (119 aa). The region spanning 886–1168 is the PKS/mFAS DH domain; it reads MPFYSESSEL…SKHWTGAVPT (283 aa). The interval 894-1083 is dehydratase (DH) domain; it reads ELAVKMKRSR…PSLLDSCIHG (190 aa). His-925 functions as the Proton acceptor; for dehydratase activity in the catalytic mechanism. Residues 1018–1168 form a C-terminal hotdog fold region; that stretch reads TTPADISNLY…SKHWTGAVPT (151 aa). Residue Asp-1078 is the Proton donor; for dehydratase activity of the active site. The tract at residues 1101–1449 is methyltransferase (CMet) domain; the sequence is PSHIGRVTLY…KFQVVDGAQD (349 aa). The disordered stretch occupies residues 1213 to 1232; it reads APPSANGHANGHANGSANGS. An enoyl reductase (ER) domain region spans residues 1518 to 1840; sequence TGTFDGAVAT…LPSDFSVSQS (323 aa). Positions 1842–2096 are ketoreductase (KR) domain; that stretch reads ALADDKTYLV…SESVLYNHLV (255 aa). The 88-residue stretch at 2109–2196 folds into the Carrier domain; sequence DPYEVLQEIV…TAVSTAEKPF (88 aa). Residues 2200 to 2414 are thioesterase (TE) domain; that stretch reads AMHQPGQTIL…WASSDATTRM (215 aa). Residues 2608-2809 are methyltransferase (CMet) domain; the sequence is YRQNKVFTSM…ATGYSNVQVC (202 aa).

It participates in mycotoxin biosynthesis. Its function is as follows. Highly reducing polyketide synthase; part of the gene cluster that mediates the biosynthesis of strobilurin A, an antifungal polyketide that contains a key beta-methoxyacrylate toxophore that targets the complex III of the mitochondrial electron transport chain. Strobilurin biosynthesis begins with construction of benzoyl CoA by step-wise elimination of ammonia from phenylalanine by the phenylalanine ammonia-lyase str11, oxygenation by str8 and retro-Claisen reaction to form benzoic acid, which is activated to its CoA thiolester benzoyl CoA by the dedicated CoA ligase str10. Benzoyl CoA forms the starter unit for the highly reducing polyketide synthase stpks1 that produces the polyketide prestrobilutin A. The FAD-dependent oxygenase str9 then catalyzes the key oxidative rearrangement responsible for the creation of the beta-methoxyacrylate toxophore. Str9 performs epoxidation of the 2,3 olefin of prestrobilutin A, followed by Meinwald rearrangement to furnish the aldehyde intermediate. Rapid enolization of the aldehyde intermediate would give the beta-methoxyacrylate skeleton and methylations catalyzed by str2 and str3 complete the synthesis and lead to the production of strobilurin A. The short-chain dehydrogenase stl2 and the dehydrogenase str4 play a role in the shunt pathway leading to the production of bolineol. The cluster encodes no obvious halogenase gene that could be involved in production of strobilurin B, nor any obvious dimethylallyl-transferase that could be involved in the production of strobilurin G. It is possible that unknown proteins encoded in, or near, the cluster (such as str1 or stl1) may form new classes of halogenases or dimethylally-transferases, or that the responsible genes are located elsewhere on the genome. Similarly, proteins encoded by str5/str6 hydrolases appear to have no chemical role in the biosynthesis of strobilurin A. Finally, no obvious self-resistance gene is found within the cluster. This is Highly reducing polyketide synthase stpks1 from Strobilurus tenacellus.